Here is a 364-residue protein sequence, read N- to C-terminus: Chorismate synthase (364 aa).

Arg-47 contributes to the NADP(+) binding site. FMN contacts are provided by residues Arg-124–Ser-126, Asn-240–Ala-241, Gly-284, Lys-299–Ser-303, and Arg-326.

The protein belongs to the chorismate synthase family. FMNH2 is required as a cofactor.

It carries out the reaction 5-O-(1-carboxyvinyl)-3-phosphoshikimate = chorismate + phosphate. Its pathway is metabolic intermediate biosynthesis; chorismate biosynthesis; chorismate from D-erythrose 4-phosphate and phosphoenolpyruvate: step 7/7. In terms of biological role, catalyzes the anti-1,4-elimination of the C-3 phosphate and the C-6 proR hydrogen from 5-enolpyruvylshikimate-3-phosphate (EPSP) to yield chorismate, which is the branch point compound that serves as the starting substrate for the three terminal pathways of aromatic amino acid biosynthesis. This reaction introduces a second double bond into the aromatic ring system. The sequence is that of Chorismate synthase from Methanobrevibacter smithii (strain ATCC 35061 / DSM 861 / OCM 144 / PS).